A 295-amino-acid polypeptide reads, in one-letter code: MEKKVGTDRVKRGMAQMQKGGVIMDVVNAEQAKIAEEAGAVAVMALERVPSDIRAAGGVARMADPRIVEEVMNAVSIPVMAKARIGHITEARVLEAMGVDYIDESEVLTPADDEFHLLKSDFTVPFVCGCRDIGEALRRIGEGAAMLRTKGEPGTGNIVEAVRHMRQVNGQIRQIAGMTDDELMVAAKNFGAPYELIKEIKTLGKLPVVNFAAGGVATPADAALMMELGADGVFVGSGIFKSDNPAKFASAIVQATTYYTDYELIGKLSKELGSPMKGIEMSRLNPEDRMQDRSI.

A D-ribose 5-phosphate-binding site is contributed by aspartate 25. Residue lysine 82 is the Schiff-base intermediate with D-ribose 5-phosphate of the active site. Position 154 (glycine 154) interacts with D-ribose 5-phosphate. Arginine 166 is a D-glyceraldehyde 3-phosphate binding site. Residues glycine 215 and glycine 236–serine 237 each bind D-ribose 5-phosphate.

It belongs to the PdxS/SNZ family. In terms of assembly, in the presence of PdxT, forms a dodecamer of heterodimers.

The enzyme catalyses aldehydo-D-ribose 5-phosphate + D-glyceraldehyde 3-phosphate + L-glutamine = pyridoxal 5'-phosphate + L-glutamate + phosphate + 3 H2O + H(+). The protein operates within cofactor biosynthesis; pyridoxal 5'-phosphate biosynthesis. Functionally, catalyzes the formation of pyridoxal 5'-phosphate from ribose 5-phosphate (RBP), glyceraldehyde 3-phosphate (G3P) and ammonia. The ammonia is provided by the PdxT subunit. Can also use ribulose 5-phosphate and dihydroxyacetone phosphate as substrates, resulting from enzyme-catalyzed isomerization of RBP and G3P, respectively. This Listeria monocytogenes serotype 4b (strain CLIP80459) protein is Pyridoxal 5'-phosphate synthase subunit PdxS.